The chain runs to 422 residues: UPF0761 membrane protein XAC0937 (422 aa).

The next 6 helical transmembrane spans lie at 45–65 (VFALVPLAIVVFGVLSAFPAF), 102–122 (FTVAGMVALVASLLITLHSIE), 151–171 (GTMLAAASMAMAAYVFALPLF), 179–199 (LAEFAWRLAPMAVEFVCIVLI), 213–233 (ALPGALLAVILMEIVKWGFGF), and 247–267 (ALSALPILLLWIYLSWVSVLL).

This sequence belongs to the UPF0761 family.

It is found in the cell inner membrane. The polypeptide is UPF0761 membrane protein XAC0937 (Xanthomonas axonopodis pv. citri (strain 306)).